The chain runs to 569 residues: Potassium-transporting ATPase potassium-binding subunit (569 aa).

10 helical membrane-spanning segments follow: residues 3-23, 64-84, 133-153, 179-199, 255-275, 281-301, 375-395, 421-441, 497-517, and 535-555; these read TEIL…YPLG, FLKS…ILLV, FVIM…MAGI, ILFP…TPMG, IVEC…LGFY, LGYV…FCNV, FGGV…AVFI, IVSL…SYVW, LALI…AGLL, and VTFG…SFFP.

The protein belongs to the KdpA family. The system is composed of three essential subunits: KdpA, KdpB and KdpC.

Its subcellular location is the cell inner membrane. Part of the high-affinity ATP-driven potassium transport (or Kdp) system, which catalyzes the hydrolysis of ATP coupled with the electrogenic transport of potassium into the cytoplasm. This subunit binds the periplasmic potassium ions and delivers the ions to the membrane domain of KdpB through an intramembrane tunnel. In Parabacteroides distasonis (strain ATCC 8503 / DSM 20701 / CIP 104284 / JCM 5825 / NCTC 11152), this protein is Potassium-transporting ATPase potassium-binding subunit.